A 225-amino-acid polypeptide reads, in one-letter code: NAD(P)H-quinone oxidoreductase subunit K, chloroplastic (225 aa).

Residues Cys43, Cys44, Cys108, and Cys139 each contribute to the [4Fe-4S] cluster site.

This sequence belongs to the complex I 20 kDa subunit family. In terms of assembly, NDH is composed of at least 16 different subunits, 5 of which are encoded in the nucleus. Requires [4Fe-4S] cluster as cofactor.

It is found in the plastid. Its subcellular location is the chloroplast thylakoid membrane. It catalyses the reaction a plastoquinone + NADH + (n+1) H(+)(in) = a plastoquinol + NAD(+) + n H(+)(out). The catalysed reaction is a plastoquinone + NADPH + (n+1) H(+)(in) = a plastoquinol + NADP(+) + n H(+)(out). In terms of biological role, NDH shuttles electrons from NAD(P)H:plastoquinone, via FMN and iron-sulfur (Fe-S) centers, to quinones in the photosynthetic chain and possibly in a chloroplast respiratory chain. The immediate electron acceptor for the enzyme in this species is believed to be plastoquinone. Couples the redox reaction to proton translocation, and thus conserves the redox energy in a proton gradient. This chain is NAD(P)H-quinone oxidoreductase subunit K, chloroplastic, found in Agrostis stolonifera (Creeping bentgrass).